The following is a 422-amino-acid chain: Enolase (422 aa).

A (2R)-2-phosphoglycerate-binding site is contributed by Gln-163. Glu-205 functions as the Proton donor in the catalytic mechanism. Residues Asp-242, Glu-283, and Asp-310 each contribute to the Mg(2+) site. (2R)-2-phosphoglycerate-binding residues include Lys-335, Arg-364, Ser-365, and Lys-386. Residue Lys-335 is the Proton acceptor of the active site.

This sequence belongs to the enolase family. The cofactor is Mg(2+).

The protein localises to the cytoplasm. The protein resides in the secreted. Its subcellular location is the cell surface. The catalysed reaction is (2R)-2-phosphoglycerate = phosphoenolpyruvate + H2O. It participates in carbohydrate degradation; glycolysis; pyruvate from D-glyceraldehyde 3-phosphate: step 4/5. Its function is as follows. Catalyzes the reversible conversion of 2-phosphoglycerate (2-PG) into phosphoenolpyruvate (PEP). It is essential for the degradation of carbohydrates via glycolysis. This chain is Enolase, found in Bdellovibrio bacteriovorus (strain ATCC 15356 / DSM 50701 / NCIMB 9529 / HD100).